Here is a 448-residue protein sequence, read N- to C-terminus: Binary larvicide subunit BinB (448 aa).

The interval 1 to 198 is beta-trefoil domain; it reads MCDSKDNSGV…TAFVNSSFYA (198 aa). Cys-67 and Cys-161 are disulfide-bonded. Residues 199-448 are probable pore-forming domain; it reads AAIPQLPQTS…NEELIPKINQ (250 aa).

Belongs to the toxin_10 family. Forms a heterodimer with BinA. Upon toxin crystal solubilization with NaOH at pH 12, only the 63-kDa (binB) and 43-kDa (binA) proteins were detected. Interacts with mosquito protein Cpm1 which acts as its host receptor. Post-translationally, processed by proteases extracted from C.pipiens larval gut; unlike its partner BinA, it does not form a stable digestion product.

The protein localises to the spore. It is found in the perispore. Functionally, component of a binary toxin active against Culex and some Aedes mosquito larvae. This subunit alone has no toxic larvicidal activity. This subunit is responsible for localized binding to specific regions of the host larval gut. Binary toxin internalization into host gut cells requires both proteins. This Lysinibacillus sphaericus (Bacillus sphaericus) protein is Binary larvicide subunit BinB (binB).